The chain runs to 144 residues: Protein cornichon (144 aa).

At 1–10 (MAFNFTAFTY) the chain is on the lumenal side. Positions 1–57 (MAFNFTAFTYIVALIGDAFLIFFAIFHVIAFDELKTDYKNPIDQCNSLNPLVLPEYL) are interaction with grk. A helical membrane pass occupies residues 11–31 (IVALIGDAFLIFFAIFHVIAF). Topologically, residues 32–56 (DELKTDYKNPIDQCNSLNPLVLPEY) are cytoplasmic. A helical transmembrane segment spans residues 57-77 (LLHLFLNLLFLFCGEWYSLCL). At 78-122 (NIPLIAYHIWRYKNRPLMSGPGLYDPTTVLKTDTLSRNLREGWIK) the chain is on the lumenal side. The helical transmembrane segment at 123–143 (LAVYLISFFYYIYGMVYSLIS) threads the bilayer. Residue T144 is a topological domain, cytoplasmic.

Belongs to the cornichon family. In terms of assembly, interacts with grk.

It localises to the endoplasmic reticulum membrane. Its function is as follows. Acts as a cargo receptor necessary for the transportation of gurken (grk) to a transitional endoplasmic reticulum (tER) site and promotes its incorporation into coat protein complex II (COPII) vesicles. Associated with gurken, produces a signal received by torpedo resulting in a signaling pathway that first establishes posterior follicle cell fates and normal localization of the anterior and posterior determinants, later they act in a signaling event inducing dorsal follicle cell fates and regulating the dorsal-ventral pattern of egg and embryo. The sequence is that of Protein cornichon (cni) from Drosophila virilis (Fruit fly).